Consider the following 138-residue polypeptide: Holo-[acyl-carrier-protein] synthase (138 aa).

2 residues coordinate Mg(2+): Asp8 and Glu60.

It belongs to the P-Pant transferase superfamily. AcpS family. The cofactor is Mg(2+).

The protein resides in the cytoplasm. It catalyses the reaction apo-[ACP] + CoA = holo-[ACP] + adenosine 3',5'-bisphosphate + H(+). Functionally, transfers the 4'-phosphopantetheine moiety from coenzyme A to a Ser of acyl-carrier-protein. This is Holo-[acyl-carrier-protein] synthase from Magnetococcus marinus (strain ATCC BAA-1437 / JCM 17883 / MC-1).